The following is a 372-amino-acid chain: Phospho-N-acetylmuramoyl-pentapeptide-transferase (372 aa).

10 helical membrane passes run 25 to 45 (RSLLSVLTSLTIGLVLGPIMI), 73 to 93 (TMGGILILLSIGISTLLWADL), 98 to 118 (VWIVLGVMVVFGAVGWADDWI), 134 to 154 (FFWTSVASLGAGIALYLIATQ), 176 to 196 (SIPLSIVPLGLAFIVFTYLVI), 211 to 231 (GLAIMPVVMVATGLGVFAYLS), 251 to 271 (LVVICSAMIGAGLAFLWYNAH), 275 to 295 (VFMGDVGALALGAMLGTIAVM), 300 to 320 (IVFAIMGGVFVMEAVSVFLQI), and 349 to 369 (QVVIRFWIITIMLVVLGLMTL).

It belongs to the glycosyltransferase 4 family. MraY subfamily. Mg(2+) is required as a cofactor.

Its subcellular location is the cell inner membrane. The enzyme catalyses UDP-N-acetyl-alpha-D-muramoyl-L-alanyl-gamma-D-glutamyl-meso-2,6-diaminopimeloyl-D-alanyl-D-alanine + di-trans,octa-cis-undecaprenyl phosphate = di-trans,octa-cis-undecaprenyl diphospho-N-acetyl-alpha-D-muramoyl-L-alanyl-D-glutamyl-meso-2,6-diaminopimeloyl-D-alanyl-D-alanine + UMP. The protein operates within cell wall biogenesis; peptidoglycan biosynthesis. In terms of biological role, catalyzes the initial step of the lipid cycle reactions in the biosynthesis of the cell wall peptidoglycan: transfers peptidoglycan precursor phospho-MurNAc-pentapeptide from UDP-MurNAc-pentapeptide onto the lipid carrier undecaprenyl phosphate, yielding undecaprenyl-pyrophosphoryl-MurNAc-pentapeptide, known as lipid I. In Acinetobacter baumannii (strain AB0057), this protein is Phospho-N-acetylmuramoyl-pentapeptide-transferase.